A 57-amino-acid polypeptide reads, in one-letter code: Conotoxin reg3.17 (57 aa).

The N-terminal stretch at 1-16 (TICLLLFPLTVVPLDG) is a signal peptide. Positions 17–44 (DQPAHQPAVRKHNIKSAVQLRQWDEEQQ) are excised as a propeptide. 3 disulfide bridges follow: cysteine 45–cysteine 57, cysteine 46–cysteine 53, and cysteine 50–cysteine 56.

This sequence belongs to the conotoxin M superfamily. As to expression, expressed by the venom duct.

The protein resides in the secreted. The sequence is that of Conotoxin reg3.17 from Conus regius (Crown cone).